Consider the following 197-residue polypeptide: Probable nicotinate-nucleotide adenylyltransferase (197 aa).

Belongs to the NadD family.

The catalysed reaction is nicotinate beta-D-ribonucleotide + ATP + H(+) = deamido-NAD(+) + diphosphate. Its pathway is cofactor biosynthesis; NAD(+) biosynthesis; deamido-NAD(+) from nicotinate D-ribonucleotide: step 1/1. Functionally, catalyzes the reversible adenylation of nicotinate mononucleotide (NaMN) to nicotinic acid adenine dinucleotide (NaAD). The protein is Probable nicotinate-nucleotide adenylyltransferase of Leptospira borgpetersenii serovar Hardjo-bovis (strain JB197).